The primary structure comprises 453 residues: Tryptophan biosynthesis protein TrpCF (453 aa).

An indole-3-glycerol phosphate synthase region spans residues 1–257 (MMQTVLAKIV…AAVRRVLLGE (257 aa)). The N-(5'-phosphoribosyl)anthranilate isomerase stretch occupies residues 258 to 453 (NKVCGLTRGQ…ASVFQTLRAY (196 aa)).

This sequence in the N-terminal section; belongs to the TrpC family. The protein in the C-terminal section; belongs to the TrpF family. As to quaternary structure, monomer.

The catalysed reaction is N-(5-phospho-beta-D-ribosyl)anthranilate = 1-(2-carboxyphenylamino)-1-deoxy-D-ribulose 5-phosphate. The enzyme catalyses 1-(2-carboxyphenylamino)-1-deoxy-D-ribulose 5-phosphate + H(+) = (1S,2R)-1-C-(indol-3-yl)glycerol 3-phosphate + CO2 + H2O. The protein operates within amino-acid biosynthesis; L-tryptophan biosynthesis; L-tryptophan from chorismate: step 3/5. Its pathway is amino-acid biosynthesis; L-tryptophan biosynthesis; L-tryptophan from chorismate: step 4/5. Bifunctional enzyme that catalyzes two sequential steps of tryptophan biosynthetic pathway. The first reaction is catalyzed by the isomerase, coded by the TrpF domain; the second reaction is catalyzed by the synthase, coded by the TrpC domain. The sequence is that of Tryptophan biosynthesis protein TrpCF (trpC) from Escherichia coli (strain K12).